The following is a 396-amino-acid chain: Tryptophan synthase beta chain (396 aa).

Lysine 88 is subject to N6-(pyridoxal phosphate)lysine.

This sequence belongs to the TrpB family. As to quaternary structure, tetramer of two alpha and two beta chains. Requires pyridoxal 5'-phosphate as cofactor.

It catalyses the reaction (1S,2R)-1-C-(indol-3-yl)glycerol 3-phosphate + L-serine = D-glyceraldehyde 3-phosphate + L-tryptophan + H2O. Its pathway is amino-acid biosynthesis; L-tryptophan biosynthesis; L-tryptophan from chorismate: step 5/5. Functionally, the beta subunit is responsible for the synthesis of L-tryptophan from indole and L-serine. In Shewanella oneidensis (strain ATCC 700550 / JCM 31522 / CIP 106686 / LMG 19005 / NCIMB 14063 / MR-1), this protein is Tryptophan synthase beta chain.